A 527-amino-acid chain; its full sequence is Bifunctional purine biosynthesis protein PurH (527 aa).

Positions 1–149 constitute an MGS-like domain; sequence MASDFLPVRR…KNFARVAVAA (149 aa).

The protein belongs to the PurH family.

The enzyme catalyses (6R)-10-formyltetrahydrofolate + 5-amino-1-(5-phospho-beta-D-ribosyl)imidazole-4-carboxamide = 5-formamido-1-(5-phospho-D-ribosyl)imidazole-4-carboxamide + (6S)-5,6,7,8-tetrahydrofolate. It catalyses the reaction IMP + H2O = 5-formamido-1-(5-phospho-D-ribosyl)imidazole-4-carboxamide. It functions in the pathway purine metabolism; IMP biosynthesis via de novo pathway; 5-formamido-1-(5-phospho-D-ribosyl)imidazole-4-carboxamide from 5-amino-1-(5-phospho-D-ribosyl)imidazole-4-carboxamide (10-formyl THF route): step 1/1. It participates in purine metabolism; IMP biosynthesis via de novo pathway; IMP from 5-formamido-1-(5-phospho-D-ribosyl)imidazole-4-carboxamide: step 1/1. In Xanthomonas axonopodis pv. citri (strain 306), this protein is Bifunctional purine biosynthesis protein PurH.